The primary structure comprises 293 residues: Large ribosomal subunit protein uL2c (293 aa).

Residues 224 to 245 (VMNPVDHPHGGGEGKSPIGRAR) form a disordered region.

The protein belongs to the universal ribosomal protein uL2 family. In terms of assembly, part of the 50S ribosomal subunit.

The protein localises to the plastid. The protein resides in the chloroplast. This is Large ribosomal subunit protein uL2c (rpl2) from Pyropia yezoensis (Susabi-nori).